Reading from the N-terminus, the 308-residue chain is 3'(2'),5'-bisphosphate nucleotidase 1 (308 aa).

An N-acetylalanine modification is found at alanine 2. Aspartate 51 acts as the Proton acceptor in catalysis. Positions 74, 117, 119, and 120 each coordinate Mg(2+). The active-site Proton acceptor is the threonine 122. At threonine 122 the chain carries Phosphothreonine. The AMP site is built by threonine 195, histidine 198, glycine 220, and lysine 224. Serine 240 is modified (phosphoserine). Lysine 244 is modified (N6-succinyllysine). Position 247 (aspartate 247) interacts with Mg(2+).

Belongs to the inositol monophosphatase superfamily. Requires Mg(2+) as cofactor. Widely expressed. Highly expressed in kidney.

It carries out the reaction adenosine 3',5'-bisphosphate + H2O = AMP + phosphate. The catalysed reaction is adenosine 2',5'-bisphosphate + H2O = AMP + phosphate. It catalyses the reaction 3'-phosphoadenylyl sulfate + H2O = adenosine 5'-phosphosulfate + phosphate. The enzyme catalyses 1D-myo-inositol 1,4-bisphosphate + H2O = 1D-myo-inositol 4-phosphate + phosphate. It carries out the reaction 1D-myo-inositol 1,3,4-trisphosphate + H2O = 1D-myo-inositol 3,4-bisphosphate + phosphate. Uncompetitively inhibited by Li(+) (IC(50)=157 uM). PAP hydrolysis is competitively inhibited by PAPS (IC(50)=0.7 uM) and by inositol 1,4-bisphosphate (IC(50)=15 uM). Phosphatase that converts 3'(2')-phosphoadenosine 5'-phosphate (PAP) to AMP and adenosine 3'-phosphate 5'-phosphosulfate (PAPS) to adenosine 5'-phosphosulfate (APS). Is also able to hydrolyze inositol 1,4-bisphosphate (Ins(1,4)P2) and inositol 1,3,4-trisphosphate (Ins(1,3,4)P3), and is not active on Ins(1)P, Ins(4)P, Ins(3,4)P2, Ins(1,4,5)P3, Ins(1,3,4,5)P4, Ins(1,3,4,5,6)P5 or InsP6. Probably prevents the toxic accumulation of PAP, a compound which inhibits a variety of proteins, including PAPS-utilizing enzymes such as sulfotransferases, and RNA processing enzymes. Could also play a role in inositol recycling and phosphoinositide metabolism. The sequence is that of 3'(2'),5'-bisphosphate nucleotidase 1 (Bpnt1) from Mus musculus (Mouse).